Reading from the N-terminus, the 313-residue chain is uncharacterized protein (313 aa).

Residues His8, His10, Glu126, His180, His207, and Asp262 each coordinate a divalent metal cation.

Belongs to the metallo-dependent hydrolases superfamily. TatD-type hydrolase family. A divalent metal cation serves as cofactor.

Functionally, putative deoxyribonuclease. This is an uncharacterized protein from Saccharomyces cerevisiae (strain ATCC 204508 / S288c) (Baker's yeast).